Reading from the N-terminus, the 341-residue chain is Holliday junction branch migration complex subunit RuvB (341 aa).

The interval 1 to 180 (MAKSHTLNPE…FGIQLRLDYY (180 aa)) is large ATPase domain (RuvB-L). Positions 19, 20, 61, 64, 65, 66, 170, 180, and 217 each coordinate ATP. Position 65 (Thr-65) interacts with Mg(2+). Positions 181–251 (NDEEMKEIVL…LCLKAFEKMG (71 aa)) are small ATPAse domain (RuvB-S). The tract at residues 254 to 341 (DLGLDGMDRQ…ENHGQDPTLF (88 aa)) is head domain (RuvB-H). DNA is bound by residues Arg-309 and Arg-314.

The protein belongs to the RuvB family. Homohexamer. Forms an RuvA(8)-RuvB(12)-Holliday junction (HJ) complex. HJ DNA is sandwiched between 2 RuvA tetramers; dsDNA enters through RuvA and exits via RuvB. An RuvB hexamer assembles on each DNA strand where it exits the tetramer. Each RuvB hexamer is contacted by two RuvA subunits (via domain III) on 2 adjacent RuvB subunits; this complex drives branch migration. In the full resolvosome a probable DNA-RuvA(4)-RuvB(12)-RuvC(2) complex forms which resolves the HJ.

It is found in the cytoplasm. The catalysed reaction is ATP + H2O = ADP + phosphate + H(+). Functionally, the RuvA-RuvB-RuvC complex processes Holliday junction (HJ) DNA during genetic recombination and DNA repair, while the RuvA-RuvB complex plays an important role in the rescue of blocked DNA replication forks via replication fork reversal (RFR). RuvA specifically binds to HJ cruciform DNA, conferring on it an open structure. The RuvB hexamer acts as an ATP-dependent pump, pulling dsDNA into and through the RuvAB complex. RuvB forms 2 homohexamers on either side of HJ DNA bound by 1 or 2 RuvA tetramers; 4 subunits per hexamer contact DNA at a time. Coordinated motions by a converter formed by DNA-disengaged RuvB subunits stimulates ATP hydrolysis and nucleotide exchange. Immobilization of the converter enables RuvB to convert the ATP-contained energy into a lever motion, pulling 2 nucleotides of DNA out of the RuvA tetramer per ATP hydrolyzed, thus driving DNA branch migration. The RuvB motors rotate together with the DNA substrate, which together with the progressing nucleotide cycle form the mechanistic basis for DNA recombination by continuous HJ branch migration. Branch migration allows RuvC to scan DNA until it finds its consensus sequence, where it cleaves and resolves cruciform DNA. This chain is Holliday junction branch migration complex subunit RuvB, found in Leptospira borgpetersenii serovar Hardjo-bovis (strain L550).